Here is a 60-residue protein sequence, read N- to C-terminus: Potassium channel toxin Tst-beta-KTx (60 aa).

The region spanning 26–60 is the BetaSPN-type CS-alpha/beta domain; it reads QFGCPAYEGYCNDHCNDIERKDGECHGFKCKCAKD. 3 cysteine pairs are disulfide-bonded: cysteine 29–cysteine 50, cysteine 36–cysteine 55, and cysteine 40–cysteine 57.

Belongs to the long chain scorpion toxin family. Class 1 subfamily. In terms of tissue distribution, expressed by the venom gland.

It localises to the secreted. Inhibits voltage-gated potassium channels Kv1.1/KCNA1, Kv1.2/KCNA2, and Kv1.3/KCNA3. In terms of biological role, does not induce hemolytic activity, lactate dehydrogenase (LDH) release from mast cells, mast cell degranulation, and antimicrobial effects. In vivo, injection into mice causes moderate edema formation, but induces very weak or no change in nociceptive sensibility. It also reduces mice locomotion, suggesting an increase in anxiety, but causes no alteration in rearing (standing on hind limbs). This Tityus stigmurus (Brazilian scorpion) protein is Potassium channel toxin Tst-beta-KTx.